A 192-amino-acid chain; its full sequence is uncharacterized protein (192 aa).

The Nudix hydrolase domain occupies 29-160; that stretch reads QRQAAVLVPI…PLDIHRRGND (132 aa). The Nudix box signature appears at 67-89; sequence GAVDNTDATLIAAALREAQEEVA. Positions 83 and 87 each coordinate Mg(2+).

It belongs to the Nudix hydrolase family. PCD1 subfamily. The cofactor is Mn(2+). Requires Mg(2+) as cofactor.

Its function is as follows. Probably mediates the hydrolysis of some nucleoside diphosphate derivatives. This is an uncharacterized protein from Klebsiella pneumoniae subsp. pneumoniae (strain ATCC 700721 / MGH 78578).